The chain runs to 167 residues: Small ribosomal subunit protein uS5 (167 aa).

The S5 DRBM domain occupies 12 to 75; it reads LEERVVTINR…EDAKKNMVFV (64 aa).

Belongs to the universal ribosomal protein uS5 family. In terms of assembly, part of the 30S ribosomal subunit. Contacts proteins S4 and S8.

With S4 and S12 plays an important role in translational accuracy. In terms of biological role, located at the back of the 30S subunit body where it stabilizes the conformation of the head with respect to the body. In Listeria innocua serovar 6a (strain ATCC BAA-680 / CLIP 11262), this protein is Small ribosomal subunit protein uS5.